We begin with the raw amino-acid sequence, 373 residues long: Stationary phase protein 5 (373 aa).

Required for survival at high temperature during stationary phase. The sequence is that of Stationary phase protein 5 (SPG5) from Saccharomyces cerevisiae (strain ATCC 204508 / S288c) (Baker's yeast).